Reading from the N-terminus, the 518-residue chain is Bifunctional purine biosynthesis protein PurH (518 aa).

The 144-residue stretch at 1–144 folds into the MGS-like domain; that stretch reads MSKRALISVS…KNHAAVTVVC (144 aa).

Belongs to the PurH family.

It catalyses the reaction (6R)-10-formyltetrahydrofolate + 5-amino-1-(5-phospho-beta-D-ribosyl)imidazole-4-carboxamide = 5-formamido-1-(5-phospho-D-ribosyl)imidazole-4-carboxamide + (6S)-5,6,7,8-tetrahydrofolate. It carries out the reaction IMP + H2O = 5-formamido-1-(5-phospho-D-ribosyl)imidazole-4-carboxamide. It functions in the pathway purine metabolism; IMP biosynthesis via de novo pathway; 5-formamido-1-(5-phospho-D-ribosyl)imidazole-4-carboxamide from 5-amino-1-(5-phospho-D-ribosyl)imidazole-4-carboxamide (10-formyl THF route): step 1/1. Its pathway is purine metabolism; IMP biosynthesis via de novo pathway; IMP from 5-formamido-1-(5-phospho-D-ribosyl)imidazole-4-carboxamide: step 1/1. The sequence is that of Bifunctional purine biosynthesis protein PurH from Lactococcus lactis subsp. cremoris (strain MG1363).